Here is a 125-residue protein sequence, read N- to C-terminus: Phosphoribosyl-AMP cyclohydrolase (125 aa).

A Mg(2+)-binding site is contributed by Asp-74. Cys-75 is a binding site for Zn(2+). 2 residues coordinate Mg(2+): Asp-76 and Asp-78. Residues Cys-92 and Cys-99 each coordinate Zn(2+).

The protein belongs to the PRA-CH family. In terms of assembly, homodimer. Requires Mg(2+) as cofactor. Zn(2+) serves as cofactor.

The protein localises to the cytoplasm. The enzyme catalyses 1-(5-phospho-beta-D-ribosyl)-5'-AMP + H2O = 1-(5-phospho-beta-D-ribosyl)-5-[(5-phospho-beta-D-ribosylamino)methylideneamino]imidazole-4-carboxamide. It participates in amino-acid biosynthesis; L-histidine biosynthesis; L-histidine from 5-phospho-alpha-D-ribose 1-diphosphate: step 3/9. In terms of biological role, catalyzes the hydrolysis of the adenine ring of phosphoribosyl-AMP. This Desulfatibacillum aliphaticivorans protein is Phosphoribosyl-AMP cyclohydrolase.